The following is a 127-amino-acid chain: MPTIQQLVRIGRTKMTKKSKSVALDSCPQRRGVCTRVYTTTPKKPNSAMRKVARVRLTNGNEVNAYIPGEGHNLQEHSIVLVRGGRVKDLPGVRYHIVRGALDTSGVAGRTQRRSKYGAKRPKEAKK.

Aspartate 89 carries the 3-methylthioaspartic acid modification. The tract at residues 101 to 127 (ALDTSGVAGRTQRRSKYGAKRPKEAKK) is disordered. Residues 111–127 (TQRRSKYGAKRPKEAKK) are compositionally biased toward basic residues.

This sequence belongs to the universal ribosomal protein uS12 family. Part of the 30S ribosomal subunit. Contacts proteins S8 and S17. May interact with IF1 in the 30S initiation complex.

Functionally, with S4 and S5 plays an important role in translational accuracy. Interacts with and stabilizes bases of the 16S rRNA that are involved in tRNA selection in the A site and with the mRNA backbone. Located at the interface of the 30S and 50S subunits, it traverses the body of the 30S subunit contacting proteins on the other side and probably holding the rRNA structure together. The combined cluster of proteins S8, S12 and S17 appears to hold together the shoulder and platform of the 30S subunit. The sequence is that of Small ribosomal subunit protein uS12 from Flavobacterium psychrophilum (strain ATCC 49511 / DSM 21280 / CIP 103535 / JIP02/86).